We begin with the raw amino-acid sequence, 378 residues long: Erythronate-4-phosphate dehydrogenase (378 aa).

The substrate site is built by S45 and T66. NAD(+) is bound by residues D146 and T175. R208 is an active-site residue. D232 provides a ligand contact to NAD(+). E237 is an active-site residue. H254 functions as the Proton donor in the catalytic mechanism. G257 contributes to the NAD(+) binding site. Y258 is a binding site for substrate.

Belongs to the D-isomer specific 2-hydroxyacid dehydrogenase family. PdxB subfamily. Homodimer.

It localises to the cytoplasm. The enzyme catalyses 4-phospho-D-erythronate + NAD(+) = (R)-3-hydroxy-2-oxo-4-phosphooxybutanoate + NADH + H(+). It functions in the pathway cofactor biosynthesis; pyridoxine 5'-phosphate biosynthesis; pyridoxine 5'-phosphate from D-erythrose 4-phosphate: step 2/5. In terms of biological role, catalyzes the oxidation of erythronate-4-phosphate to 3-hydroxy-2-oxo-4-phosphonooxybutanoate. The polypeptide is Erythronate-4-phosphate dehydrogenase (Citrobacter koseri (strain ATCC BAA-895 / CDC 4225-83 / SGSC4696)).